A 1076-amino-acid polypeptide reads, in one-letter code: Enhancer of mRNA-decapping protein 4-like protein pdc1 (1076 aa).

Low complexity-rich tracts occupy residues 1 to 19 (MNEQDLLNSLRRDLNLPNL) and 53 to 69 (SSLLSLLNAGLNASNQS). 3 disordered regions span residues 1 to 82 (MNEQ…ASHS), 95 to 127 (GAKPSGTASGADVKRSDSESTEATSNERPFNPV), and 139 to 204 (STGP…AEEQ). Polar residues predominate over residues 70 to 82 (PSNSGPKYYASHS). The span at 153–173 (NDSQDTAFQSSRNMPSDTSVA) shows a compositional bias: polar residues. Residues 174 to 184 (SPDYSHSQSSS) are compositionally biased toward low complexity. Residues 185 to 195 (PIANYQESGNS) are compositionally biased toward polar residues. WD repeat units follow at residues 292 to 334 (NSPN…STSE) and 402 to 441 (DTGISAKEYDFSYDGTVFATVDKDALIKIYTVPTTFPSTP). Disordered stretches follow at residues 666–714 (RHST…SPSS) and 892–934 (TAPD…PAQG). The segment covering 669–688 (TASPSTVNSGFSTPRSQATG) has biased composition (polar residues). 2 positions are modified to phosphoserine: Ser-671 and Ser-673. Phosphothreonine is present on Thr-674. A compositionally biased stretch (basic and acidic residues) spans 695–706 (DKGERFETKDKS). Positions 789–1076 (MQVALKEEIA…ISEISVASSN (288 aa)) are interaction with dcp2. At Ser-1075 the chain carries Phosphoserine.

The protein belongs to the WD repeat EDC4 family. As to quaternary structure, interacts with dcp2; via C-terminus.

The protein resides in the cytoplasm. The protein localises to the P-body. Involved in P-body formation. Acts as a functional homolog of human EDC4, which plays a role in mRNA decapping in the process of mRNA degradation. Enhances the decapping activity of dcp2. Together with edc3, acts as a scaffolding protein sufficient for the phase transition of the components of the 5' to 3' mRNA degradation machinery to form P-bodies. Intermolecular interactions between the edc3 Sm domain and at least 10 helical leucine-rich motifs in dcp2 and pdc1 build the core of the interaction network of this spontaneous clustering process. In Schizosaccharomyces pombe (strain 972 / ATCC 24843) (Fission yeast), this protein is Enhancer of mRNA-decapping protein 4-like protein pdc1.